A 253-amino-acid chain; its full sequence is UDP-Glc:alpha-D-GlcNAc-diphosphoundecaprenol beta-1,3-glucosyltransferase WfgD (253 aa).

Belongs to the glycosyltransferase 2 family. Mn(2+) is required as a cofactor. Mg(2+) serves as cofactor.

The protein localises to the cell inner membrane. It catalyses the reaction N-acetyl-alpha-D-glucosaminyl-di-trans,octa-cis-undecaprenyl diphosphate + UDP-alpha-D-glucose = beta-D-Glc-(1-&gt;3)-alpha-D-GlcNAc-di-trans,octa-cis-undecaprenyl diphosphate + UDP + H(+). It functions in the pathway bacterial outer membrane biogenesis; lipopolysaccharide biosynthesis. Catalyzes the addition of Glc, the second sugar moiety of the O152-antigen repeating unit, to GlcNAc-pyrophosphate-undecaprenol. The polypeptide is UDP-Glc:alpha-D-GlcNAc-diphosphoundecaprenol beta-1,3-glucosyltransferase WfgD (wfgD) (Escherichia coli).